The following is a 284-amino-acid chain: Alpha-S1-casein (284 aa).

The signal sequence occupies residues 1-15 (MKLLILTCLVAAALA). Disordered stretches follow at residues 21–44 (RRNAVSSQTQQENSSSEEQEIVKQ) and 78–111 (SSAEEQATASAQEDSSSSSSSSEESKDAIPSATE). Composition is skewed to low complexity over residues 24–36 (AVSSQTQQENSSS) and 78–99 (SSAEEQATASAQEDSSSSSSSS). Residues Ser-79, Ser-93, Ser-94, Ser-95, Ser-96, Ser-97, Ser-98, and Ser-99 each carry the phosphoserine modification. 10 repeat units span residues 138-143 (LLQQAS), 144-149 (LAQQAS), 150-155 (LAQQAS), 156-161 (LAQQAL), 162-167 (LAQQPS), 168-173 (LAQQAA), 174-179 (LAQQAS), 180-185 (LAQQAS), 186-191 (LAQQAS), and 192-197 (LAQKHH). The 10 X 6 AA tandem repeats stretch occupies residues 138–197 (LLQQASLAQQASLAQQASLAQQALLAQQPSLAQQAALAQQASLAQQASLAQQASLAQKHH).

It belongs to the alpha-casein family. As to expression, mammary gland specific. Secreted in milk.

The protein localises to the secreted. Its function is as follows. Important role in the capacity of milk to transport calcium phosphate. The polypeptide is Alpha-S1-casein (Csn1s1) (Rattus norvegicus (Rat)).